Here is a 681-residue protein sequence, read N- to C-terminus: Anaphase-promoting complex subunit 2 (681 aa).

The protein belongs to the cullin family. As to quaternary structure, the APC/C is composed of at least 13 subunits: apc1, apc2, nuc2, apc4, apc5, cut9, apc8, apc10, apc11, hcn1, apc13, apc14 and apc15.

Component of the anaphase-promoting complex/cyclosome (APC/C), a cell cycle-regulated E3 ubiquitin-protein ligase complex that controls progression through mitosis and the G1 phase of the cell cycle. The APC/C is thought to confer substrate specificity and, in the presence of ubiquitin-conjugating E2 enzymes, it catalyzes the formation of protein-ubiquitin conjugates that are subsequently degraded by the 26S proteasome. The chain is Anaphase-promoting complex subunit 2 (apc2) from Schizosaccharomyces pombe (strain 972 / ATCC 24843) (Fission yeast).